The primary structure comprises 100 residues: Defensin-6 (100 aa).

An N-terminal signal peptide occupies residues 1-19; sequence MRTLTILTAVLLVALQAKA. The propeptide occupies 20–68; that stretch reads EPLQAEDDPLQAKAYEADAQEQRGANDQDFAVSFAEDASSSLRALGSTR. 3 disulfide bridges follow: Cys72-Cys99, Cys74-Cys88, and Cys78-Cys98.

Belongs to the alpha-defensin family. In terms of assembly, homodimer. Self-assembles into higher-order oligomers termed nanonets, fibril-like structures that entrap microbes. Self-assembly into nanonets seems to protect against proteolytic digestion in duodenal fluid. Interacts with Y.enterocolitica invasin and S.typhimurium fliC/flagellin; the interaction creates an anchoring site for progressive DEFA6 self-assembly into nanonets. In terms of processing, proteolytically cleaved by trypsin at Arg-68; the propeptide is stored in the tissue of the small intestine and the mature peptide is found in the luminal fluid; cleavage may occur during or after release into the lumen. The N-terminal propeptide region suppresses self-assembly and renders DEFA6 propeptide unable to agglutinate bacteria and protect human epithelial cells from bacterial invasion. Under reducing conditions, naturally present in the gut owing to the low redox potential or enzymatically generated by the thioredoxin system, the disulfide bridges are opened leading to a conformational change of DEF6, thereby changing its antimicrobial spectrum. The reduced form exhibits inhibitory activity against anaerobic bacteria, in contrast to the minimal antimicrobial activity of the disulfide-linked oxidized form. The formation of higher-order nanonets and bacterial entrapment is independent of the redox state. Expressed in Paneth cells of the small intestine (at protein level).

It localises to the secreted. Its subcellular location is the cytoplasmic vesicle. The protein localises to the secretory vesicle. Its function is as follows. Host-defense peptide that contributes to intestinal innate immunity and mediates homeostasis at mucosal surfaces by forming higher-order oligomers that capture bacteria and prevent microbial invasion of the epithelium. After binding to bacterial surface proteins, undergoes ordered self-assembly to form fibril-like nanonets that surround and entangle bacteria and thereby prevent bacterial invasion across the epithelial barrier. Entangles and agglutinates Gram-negative bacteria, such as E.coli, S.typhimurium and Y.enterocolitica, and Gram-positive bacteria such as L.monocytogenes, thereby protecting the intestine against invasion by enteric bacterial pathogens. Blocks adhesion of C.albicans to intestinal epithelial cells and thereby suppresses fungal invasion of epithelial cells and biofilm formation. Under reducing conditions and in an acidic environment similar to the intestinal milieu, exhibits inhibitory activity against anaerobic bacteria such as B.adolescentis, L.acidophilus and B.breve, as well as B.longum and S.thermophilus, possibly by leading to alterations in bacterial cell envelope structures. The disulfide-linked oxidized form exhibits negligible antimicrobial activity against Gram-negative and Gram-positive bacteria, as compared to the enteric defensin DEFA5. This is Defensin-6 (DEFA6) from Homo sapiens (Human).